Reading from the N-terminus, the 118-residue chain is UPF0125 protein RSc1426 (118 aa).

It belongs to the UPF0125 (RnfH) family.

This is UPF0125 protein RSc1426 from Ralstonia nicotianae (strain ATCC BAA-1114 / GMI1000) (Ralstonia solanacearum).